The following is a 99-amino-acid chain: Small integral membrane protein 14 (99 aa).

The Lumenal segment spans residues 1–49 (MAEGGFDPCECVCSHEHAMRRLINLLRQSQSYCTDTECLQELPGPSGDN). A helical transmembrane segment spans residues 50-70 (GISVTMILVAWMVIALILFLL). Over 71-99 (RPPNLRGSNLPGKPTSPHNGQDPPAPPVD) the chain is Cytoplasmic. The disordered stretch occupies residues 77–99 (GSNLPGKPTSPHNGQDPPAPPVD).

The protein resides in the endoplasmic reticulum membrane. In Pongo abelii (Sumatran orangutan), this protein is Small integral membrane protein 14 (SMIM14).